Here is a 449-residue protein sequence, read N- to C-terminus: XK-related protein 2 (449 aa).

10 consecutive transmembrane segments (helical) span residues 35 to 55 (FSIL…LYMV), 68 to 88 (TYTF…LIFV), 98 to 118 (LSLF…EAMI), 174 to 194 (IQAF…SLIS), 204 to 224 (LMAF…MLAI), 241 to 261 (LCIT…LVLF), 269 to 289 (AVPF…VKFW), 306 to 326 (VGTL…NFSC), 357 to 377 (LVEN…VLLN), and 382 to 402 (LIAV…LLFF).

The protein belongs to the XK family.

Its subcellular location is the membrane. The chain is XK-related protein 2 (Xkrx) from Mus musculus (Mouse).